Consider the following 118-residue polypeptide: Ribosome-binding factor A (118 aa).

Belongs to the RbfA family. As to quaternary structure, monomer. Binds 30S ribosomal subunits, but not 50S ribosomal subunits or 70S ribosomes.

It localises to the cytoplasm. One of several proteins that assist in the late maturation steps of the functional core of the 30S ribosomal subunit. Associates with free 30S ribosomal subunits (but not with 30S subunits that are part of 70S ribosomes or polysomes). Required for efficient processing of 16S rRNA. May interact with the 5'-terminal helix region of 16S rRNA. The polypeptide is Ribosome-binding factor A (Bacillus cereus (strain AH187)).